The following is a 415-amino-acid chain: Extracellular signal-regulated kinase 1 (415 aa).

A Protein kinase domain is found at 66-369; that stretch reads YQILEIVGEG…VEDALKHPYL (304 aa). ATP-binding positions include 72-80 and lysine 95; that span reads VGEGAYGIV. Aspartate 190 serves as the catalytic Proton acceptor. The residue at position 226 (threonine 226) is a Phosphothreonine. The TXY motif lies at 226-228; the sequence is TEY. Tyrosine 228 carries the post-translational modification Phosphotyrosine.

It belongs to the protein kinase superfamily. CMGC Ser/Thr protein kinase family. MAP kinase subfamily. The cofactor is Mg(2+). In terms of processing, dually phosphorylated on Thr-226 and Tyr-228, which activates the enzyme.

It carries out the reaction L-seryl-[protein] + ATP = O-phospho-L-seryl-[protein] + ADP + H(+). It catalyses the reaction L-threonyl-[protein] + ATP = O-phospho-L-threonyl-[protein] + ADP + H(+). Activated by tyrosine and threonine phosphorylation. In Candida albicans (strain WO-1) (Yeast), this protein is Extracellular signal-regulated kinase 1 (CEK1).